The sequence spans 354 residues: uncharacterized protein (354 aa).

The disordered stretch occupies residues Q96–Q130. Residues K113–S127 show a composition bias toward basic and acidic residues.

This is an uncharacterized protein from Caenorhabditis elegans.